A 186-amino-acid polypeptide reads, in one-letter code: Peptide deformylase (186 aa).

Fe cation is bound by residues Cys113 and His157. Glu158 is an active-site residue. His161 lines the Fe cation pocket.

It belongs to the polypeptide deformylase family. Requires Fe(2+) as cofactor.

It carries out the reaction N-terminal N-formyl-L-methionyl-[peptide] + H2O = N-terminal L-methionyl-[peptide] + formate. Its function is as follows. Removes the formyl group from the N-terminal Met of newly synthesized proteins. Requires at least a dipeptide for an efficient rate of reaction. N-terminal L-methionine is a prerequisite for activity but the enzyme has broad specificity at other positions. In Malacoplasma penetrans (strain HF-2) (Mycoplasma penetrans), this protein is Peptide deformylase.